The chain runs to 134 residues: Ribosome-binding factor A (134 aa).

Belongs to the RbfA family. Monomer. Binds 30S ribosomal subunits, but not 50S ribosomal subunits or 70S ribosomes.

The protein localises to the cytoplasm. One of several proteins that assist in the late maturation steps of the functional core of the 30S ribosomal subunit. Associates with free 30S ribosomal subunits (but not with 30S subunits that are part of 70S ribosomes or polysomes). Required for efficient processing of 16S rRNA. May interact with the 5'-terminal helix region of 16S rRNA. The polypeptide is Ribosome-binding factor A (Cyanothece sp. (strain PCC 7425 / ATCC 29141)).